The following is a 254-amino-acid chain: Imidazole glycerol phosphate synthase subunit HisF (254 aa).

Residues Asp11 and Asp130 contribute to the active site.

It belongs to the HisA/HisF family. In terms of assembly, heterodimer of HisH and HisF.

The protein resides in the cytoplasm. It catalyses the reaction 5-[(5-phospho-1-deoxy-D-ribulos-1-ylimino)methylamino]-1-(5-phospho-beta-D-ribosyl)imidazole-4-carboxamide + L-glutamine = D-erythro-1-(imidazol-4-yl)glycerol 3-phosphate + 5-amino-1-(5-phospho-beta-D-ribosyl)imidazole-4-carboxamide + L-glutamate + H(+). Its pathway is amino-acid biosynthesis; L-histidine biosynthesis; L-histidine from 5-phospho-alpha-D-ribose 1-diphosphate: step 5/9. Functionally, IGPS catalyzes the conversion of PRFAR and glutamine to IGP, AICAR and glutamate. The HisF subunit catalyzes the cyclization activity that produces IGP and AICAR from PRFAR using the ammonia provided by the HisH subunit. This is Imidazole glycerol phosphate synthase subunit HisF from Staphylococcus carnosus (strain TM300).